Here is a 348-residue protein sequence, read N- to C-terminus: Phenylalanine--tRNA ligase alpha subunit (348 aa).

Residue Glu-269 coordinates Mg(2+).

It belongs to the class-II aminoacyl-tRNA synthetase family. Phe-tRNA synthetase alpha subunit type 1 subfamily. As to quaternary structure, tetramer of two alpha and two beta subunits. Mg(2+) serves as cofactor.

It is found in the cytoplasm. It carries out the reaction tRNA(Phe) + L-phenylalanine + ATP = L-phenylalanyl-tRNA(Phe) + AMP + diphosphate + H(+). The chain is Phenylalanine--tRNA ligase alpha subunit from Dechloromonas aromatica (strain RCB).